The primary structure comprises 430 residues: MVDRSDNAAESFDDAVEERVINEEYKIWKKNTPFLYDLVMTHALEWPSLTAQWLPDVTKQDGKDYSVHRLILGTHTSDEQNHLLIASVQLPSEDAQFDGSHYDNEKGEFGGFGSVCGKIEIEIKINHEGEVNRARYMPQNACVIATKTPSSDVLVFDYTKHPSKPEPSGECQPDLRLRGHQKEGYGLSWNPNLNGYLLSASDDHTICLWDINATPKEHRVIDAKNIFTGHTAVVEDVAWHLLHESLFGSVADDQKLMIWDTRNNNTSKPSHTVDAHTAEVNCLSFNPYSEFILATGSADKTVALWDLRNLKLKLHSFESHKDEIFQVQWSPHNETILASSGTDRRLHVWDLSKIGEEQSTEDAEDGPPELLFIHGGHTAKISDFSWNPNEPWIICSVSEDNIMQVWQMAENVYNDEEPEIPASELETNTA.

Residues Ser-11 and Ser-100 each carry the phosphoserine modification. 6 WD repeats span residues 126-159, 179-210, 229-260, 275-306, 319-350, and 376-407; these read NHEG…FDYT, GHQK…CLWD, GHTA…MIWD, AHTA…ALWD, SHKD…HVWD, and GHTA…QVWQ.

It belongs to the WD repeat RBAP46/RBAP48/MSI1 family. As to quaternary structure, probably binds directly to helix 1 of the histone fold of histone H4, a region that is not accessible when H4 is in chromatin. Self associates. Associates with chromatin. Component of the CAF-1 complex, composed of Caf1-55, Caf1-105 and Caf1-180; within the CAF-1 complex, Caf1-180 interacts directly with both Caf1-55 and Caf1-105. Component of the NuRD complex, composed of at least Caf1-55, Mi-2, MTA1-like and HDAC1/Rpd3. Within the NuRD complex, Caf1-55 may interact directly with Mi-2, MTA1-like and HDAC1/Rpd3. The NuRD complex may also associate with the methyl-DNA binding protein MBD-like via Caf1-55 and Mi-2. Component of the NURF complex, composed of Caf1-55, E(bx), Nurf-38 and Iswi. Component of the polycomb repressive complex 2 (PRC2, also known as the Esc/E(Z) complex), composed of Caf1-55, esc, E(z), Su(z)12, and possibly pho. PRC2 associates with the accessory components Jarid2 and jing to form the PRC2 Jarid2-jing variant (PRC2.2). PRC2 may also associate with Pcl and HDAC1/Rpd3 during early embryogenesis. Interacts with Rbf and Rbf2. Component of the DREAM complex at least composed of Myb, Caf1-55, mip40, mip120, mip130, E2f2, Dp, Rbf, Rbf2, lin-52, HDAC1/Rpd3 and l(3)mbt.

The protein localises to the nucleus. Its function is as follows. Core histone-binding subunit that may target chromatin assembly factors, chromatin remodeling factors and histone deacetylases to their histone substrates in a manner that is regulated by nucleosomal DNA. Component of several complexes which regulate chromatin metabolism. These include the chromatin assembly factor 1 (CAF-1) complex, which is required for chromatin assembly following DNA replication and DNA repair; the nucleosome remodeling and deacetylase complex (the NuRD complex), which promotes transcriptional repression by histone deacetylation and nucleosome remodeling; the nucleosome remodeling factor (NURF) complex, which catalyzes ATP-dependent nucleosome sliding and facilitates transcription of chromatin; and the polycomb group (PcG) repressor complex ESC-E(Z), which promotes repression of homeotic genes during development. Also required for transcriptional repression of E2F target genes by E2f2 and Rbf or Rbf2. This chain is Chromatin assembly factor 1 p55 subunit, found in Drosophila melanogaster (Fruit fly).